Here is a 156-residue protein sequence, read N- to C-terminus: Deoxyuridine 5'-triphosphate nucleotidohydrolase (156 aa).

Residues 74 to 76 (RSG), Asn87, 91 to 93 (TID), and Lys101 contribute to the substrate site.

Belongs to the dUTPase family. The cofactor is Mg(2+).

The enzyme catalyses dUTP + H2O = dUMP + diphosphate + H(+). The protein operates within pyrimidine metabolism; dUMP biosynthesis; dUMP from dCTP (dUTP route): step 2/2. Functionally, this enzyme is involved in nucleotide metabolism: it produces dUMP, the immediate precursor of thymidine nucleotides and it decreases the intracellular concentration of dUTP so that uracil cannot be incorporated into DNA. The chain is Deoxyuridine 5'-triphosphate nucleotidohydrolase from Wolbachia sp. subsp. Brugia malayi (strain TRS).